The sequence spans 1139 residues: GRIP and coiled-coil domain-containing protein (1139 aa).

The interval 366–388 (NDDSQINNNVSNKVNSPDDDPNT) is disordered. A compositionally biased stretch (polar residues) spans 369–380 (SQINNNVSNKVN). 2 coiled-coil regions span residues 472 to 648 (VTKL…INNE) and 758 to 877 (LYIL…ETQQ). The tract at residues 1004–1024 (NEQENDNNNNNNNNNNNNNVE) is disordered. The segment covering 1009–1022 (DNNNNNNNNNNNNN) has biased composition (low complexity). Residues 1043 to 1084 (YKKIRKKLETYEILLNEQQEGKKKMTEEINSLKNQVKNYESI) are a coiled coil. The 52-residue stretch at 1084–1135 (INGNYQHIIYQKNILSNFIAQIPSRIQVDDYVSVIFNSFNFSNQEIEAINIK) folds into the GRIP domain.

This Plasmodium falciparum (isolate 3D7) protein is GRIP and coiled-coil domain-containing protein.